The primary structure comprises 732 residues: Cullin-3B (732 aa).

The Cullin neddylation domain occupies 662-724 (DRKPQIEAAI…RDFLERDNTD (63 aa)). A Glycyl lysine isopeptide (Lys-Gly) (interchain with G-Cter in NEDD8) cross-link involves residue K676.

Belongs to the cullin family. Interacts with BTB/POZ-MATH proteins BPM1 and BPM3. In terms of processing, neddylated. Deneddylated via its interaction with the COP9 signalosome (CSN) complex.

It participates in protein modification; protein ubiquitination. Functionally, component of the cullin-RING ubiquitin ligases (CRL), or CUL3-RBX1-BTB protein E3 ligase complexes which mediate the ubiquitination and subsequent proteasomal degradation of target proteins. The functional specificity of the CRL complex depends on the BTB domain-containing protein as the substrate recognition component. Involved in embryo pattern formation and endosperm development. Required for the normal division and organization of the root stem cells and columella root cap cells. Regulates primary root growth by an unknown pathway, but in an ethylene-dependent manner. Functions in distal root patterning, by an ethylene-independent mechanism. Functionally redundant with CUL3A. The sequence is that of Cullin-3B (CUL3B) from Arabidopsis thaliana (Mouse-ear cress).